A 307-amino-acid chain; its full sequence is ADP,ATP carrier protein 3 (307 aa).

Solcar repeat units follow at residues 10 to 103 (TNFA…IKLM), 114 to 206 (KWFA…LKPL), and 214 to 300 (GSFL…LQMI). Transmembrane regions (helical) follow at residues 12–39 (FAIN…VKIL), 80–104 (TANV…KLMF), 112–132 (YGKW…LSLL), 182–203 (FMPS…FDSL), and 217–237 (LASF…SYPL). ADP-binding residues include arginine 85 and lysine 97. Arginine 241 provides a ligand contact to ADP. The tract at residues 241–246 (RRRMMM) is important for transport activity. The short motif at 241-246 (RRRMMM) is the Nucleotide carrier signature motif element. The helical transmembrane segment at 277 to 297 (CGANILRSVAGAGVISMYDQL) threads the bilayer.

This sequence belongs to the mitochondrial carrier (TC 2.A.29) family. Monomer.

The protein localises to the mitochondrion inner membrane. The catalysed reaction is ADP(in) + ATP(out) = ADP(out) + ATP(in). The matrix-open state (m-state) is inhibited by the membrane-permeable bongkrekic acid (BKA). The cytoplasmic-open state (c-state) is inhibited by the membrane-impermeable toxic inhibitor carboxyatractyloside (CATR). ADP:ATP antiporter that mediates import of ADP into the mitochondrial matrix for ATP synthesis, and export of ATP out to fuel the cell. Cycles between the cytoplasmic-open state (c-state) and the matrix-open state (m-state): operates by the alternating access mechanism with a single substrate-binding site intermittently exposed to either the cytosolic (c-state) or matrix (m-state) side of the inner mitochondrial membrane. The sequence is that of ADP,ATP carrier protein 3 (AAC3) from Saccharomyces cerevisiae (strain ATCC 204508 / S288c) (Baker's yeast).